A 488-amino-acid chain; its full sequence is MTDSPGGVAPASPVEDASDASLGQPEEGAPCQVVLQGAELNGILQAFAPLRTSLLDSLLVMGDRGILIHNTIFGEQVFLPLEHSQFSRYRWRGPTAAFLSLVDQKRSLLSVFRANQYPDLRRVELAITGQAPFRTLVQRIWTTTSDGEAVELASETLMKRELTSFVVLVPQGTPDVQLRLTRPQLTKVLNATGADSATPTTFELGVNGKFSVFTTSTCVTFAAREEGVSSSTSTQVQILSNALTKAGQAAANAKTVYGENTHRTFSVVVDDCSMRAVLRRLQVGGGTLKFFLTTPVPSLCVTATGPNAVSAVFLLKPQKICLDWLGHSQGSPSAGSSASRASGSEPTDSQDSASDAVSHGDPEDLDGAARAGEAGALHACPMPSSTTRVTPTTKRGRSGGEDARADTALKKPKTGSPTAPPPADPVPLDTEDDSDAADGTAARPAAPDARSGSRYACYFRDLPTGEASPGAFSAFRGGPQTPYGFGFP.

Disordered regions lie at residues 1-26, 331-453, and 469-488; these read MTDS…GQPE, SPSA…RSGS, and PGAF…FGFP. Positions 331-344 are enriched in low complexity; sequence SPSAGSSASRASGS. Residues 345–355 show a composition bias toward polar residues; sequence EPTDSQDSASD. The span at 368–379 shows a compositional bias: low complexity; that stretch reads AARAGEAGALHA. Residues 383 to 393 are compositionally biased toward polar residues; that stretch reads PSSTTRVTPTT. The Bipartite nuclear localization signal motif lies at 394-413; that stretch reads KRGRSGGEDARADTALKKPK. Basic and acidic residues predominate over residues 398-409; sequence SGGEDARADTAL. Positions 437–453 are enriched in low complexity; sequence ADGTAARPAAPDARSGS.

The protein belongs to the herpesviridae DNA polymerase processivity factor family. In terms of assembly, interacts with the DNA polymerase catalytic subunit UL30. Interacts with the origin-binding protein.

Its subcellular location is the host nucleus. Plays an essential role in viral DNA replication by acting as the polymerase accessory subunit. Associates with the viral polymerase to increase its processivity and forms high-affinity direct interactions with DNA. Facilitates the origin-binding protein UL9 loading onto DNA thus increasing its ability to assemble into a functional complex capable of unwinding duplex DNA. The chain is DNA polymerase processivity factor from Homo sapiens (Human).